The primary structure comprises 306 residues: Cysteine synthase (306 aa).

Lysine 46 carries the N6-(pyridoxal phosphate)lysine modification. Pyridoxal 5'-phosphate is bound by residues asparagine 76, glycine 180–threonine 184, and serine 267.

Belongs to the cysteine synthase/cystathionine beta-synthase family. As to quaternary structure, homodimer. Pyridoxal 5'-phosphate serves as cofactor.

It catalyses the reaction O-acetyl-L-serine + hydrogen sulfide = L-cysteine + acetate. Its pathway is amino-acid biosynthesis; L-cysteine biosynthesis; L-cysteine from L-serine: step 2/2. The sequence is that of Cysteine synthase (cysM) from Helicobacter pylori (strain ATCC 700392 / 26695) (Campylobacter pylori).